The following is a 292-amino-acid chain: Protein PHR1-LIKE 3 (292 aa).

Positions 34–94 (TDPKPRLRWT…HLQKFRLGRQ (61 aa)) constitute an HTH myb-type domain. The H-T-H motif DNA-binding region spans 65–90 (PKTIMRTMGVKGLTLYHLKSHLQKFR). Residues 137–157 (TEALRAQMEVQRRLHEQLEVQ) are a coiled coil. The short motif at 150 to 155 (LHEQLE) is the LHEQLE element.

The protein belongs to the MYB-CC family. As to quaternary structure, homo- and heterodimers. Interacts with PHL2, but not with PHR1.

The protein localises to the nucleus. Its function is as follows. Transcriptional activator. Probable component of the central regulatory system controlling transcriptional responses to Pi starvation. Binds in a sequence-specific manner to phosphate starvation-regulated promoters. Required for female gametophyte development and function. The protein is Protein PHR1-LIKE 3 of Arabidopsis thaliana (Mouse-ear cress).